The chain runs to 136 residues: Nucleoside diphosphate kinase (136 aa).

Residues lysine 10, phenylalanine 58, arginine 86, threonine 92, arginine 104, and asparagine 114 each contribute to the ATP site. The Pros-phosphohistidine intermediate role is filled by histidine 117.

It belongs to the NDK family. As to quaternary structure, homotetramer. Mg(2+) serves as cofactor.

The protein localises to the cytoplasm. The enzyme catalyses a 2'-deoxyribonucleoside 5'-diphosphate + ATP = a 2'-deoxyribonucleoside 5'-triphosphate + ADP. The catalysed reaction is a ribonucleoside 5'-diphosphate + ATP = a ribonucleoside 5'-triphosphate + ADP. Its function is as follows. Major role in the synthesis of nucleoside triphosphates other than ATP. The ATP gamma phosphate is transferred to the NDP beta phosphate via a ping-pong mechanism, using a phosphorylated active-site intermediate. In Mycolicibacterium gilvum (strain PYR-GCK) (Mycobacterium gilvum (strain PYR-GCK)), this protein is Nucleoside diphosphate kinase.